Here is a 124-residue protein sequence, read N- to C-terminus: Urease subunit beta (124 aa).

This sequence belongs to the urease beta subunit family. As to quaternary structure, heterotrimer of UreA (gamma), UreB (beta) and UreC (alpha) subunits. Three heterotrimers associate to form the active enzyme.

It is found in the cytoplasm. The enzyme catalyses urea + 2 H2O + H(+) = hydrogencarbonate + 2 NH4(+). It participates in nitrogen metabolism; urea degradation; CO(2) and NH(3) from urea (urease route): step 1/1. The sequence is that of Urease subunit beta from Bacillus velezensis (strain DSM 23117 / BGSC 10A6 / LMG 26770 / FZB42) (Bacillus amyloliquefaciens subsp. plantarum).